We begin with the raw amino-acid sequence, 251 residues long: Aquaporin (251 aa).

The Cytoplasmic segment spans residues 1 to 11 (MAGETLRKIQS). A helical membrane pass occupies residues 12 to 32 (LLGEMVASFIFGFAVYSAILG). Residues 33-42 (STIAQQPAAK) are Extracellular-facing. The helical transmembrane segment at 43 to 63 (VIIGLTVGFSAIGIIYSFSDV) threads the bilayer. Topologically, residues 64–86 (TIAHFNPAITLAAILTGKMGILC) are cytoplasmic. Positions 69 to 71 (NPA) match the NPA motif. A helical membrane pass occupies residues 87–107 (GLGYMLAQCVGFILAVCALLV). Residues 108–133 (CSPVGYKETLNVIRPAPAPFGADNLN) lie on the Extracellular side of the membrane. A helical membrane pass occupies residues 134–154 (VFFTEFFLTAILVHIAFAVAV). At 155-179 (NPYRPKVDTDGKFVDPDEKEPVDRR) the chain is on the cytoplasmic side. The helical transmembrane segment at 180 to 200 (ITAPLCIGLTLGFLAFMGLVT) threads the bilayer. Over 201–224 (SGGAFNPGLTLAPVIMSNTWQHFW) the chain is Extracellular. Positions 206–208 (NPG) match the NPG motif. The chain crosses the membrane as a helical span at residues 225-245 (LYLGAQYLGGLVGGLLQVFVL). At 246-251 (YKLSSN) the chain is on the cytoplasmic side.

This sequence belongs to the MIP/aquaporin (TC 1.A.8) family.

Its subcellular location is the cell membrane. Functionally, water channel required to facilitate the transport of water across membranes. Involved in osmotolerance. This Encephalitozoon hellem (Microsporidian parasite) protein is Aquaporin (AQP).